A 340-amino-acid chain; its full sequence is TD and POZ domain-containing protein 5 (340 aa).

Positions 19–149 (EFCYVWTIRN…ENKLTLCCKV (131 aa)) constitute an MATH domain. A BTB domain is found at 188 to 255 (TDCCLLVAGH…IYTGKAPHLQ (68 aa)).

This sequence belongs to the Tdpoz family.

In Mus musculus (Mouse), this protein is TD and POZ domain-containing protein 5.